Consider the following 319-residue polypeptide: Aliphatic sulfonates import ATP-binding protein SsuB (319 aa).

Residues 63-282 (VTLSGVSKRF…ARASAAFAAL (220 aa)) enclose the ABC transporter domain. 95 to 102 (GRSGCGKS) serves as a coordination point for ATP.

The protein belongs to the ABC transporter superfamily. Aliphatic sulfonates importer (TC 3.A.1.17.2) family. As to quaternary structure, the complex is composed of two ATP-binding proteins (SsuB), two transmembrane proteins (SsuC) and a solute-binding protein (SsuA).

Its subcellular location is the cell inner membrane. The enzyme catalyses ATP + H2O + aliphatic sulfonate-[sulfonate-binding protein]Side 1 = ADP + phosphate + aliphatic sulfonateSide 2 + [sulfonate-binding protein]Side 1.. Functionally, part of the ABC transporter complex SsuABC involved in aliphatic sulfonates import. Responsible for energy coupling to the transport system. The sequence is that of Aliphatic sulfonates import ATP-binding protein SsuB from Burkholderia ambifaria (strain ATCC BAA-244 / DSM 16087 / CCUG 44356 / LMG 19182 / AMMD) (Burkholderia cepacia (strain AMMD)).